The following is a 472-amino-acid chain: MNAVSDQAVADYHVADMSLAAWGRRELAIAETEMPGLMAIREEFAASQPLKGARIAGSLHMTIQTGVLIETLVALGAEVRWASCNIFSTQDHAAAAIAATGTPVFAVKGETLEEYWQYTHRIFEWPEGRHANMILDDGGDATLLLHLGARAEQDASVLAKPGSEEERVLFAAIKATLARDPKWYSTRLAQIRGVTEETTTGVHRLYQMAQKGELAFAAINVNDSVTKSKFDNLYGCRESLVDGIKRATDVMVAGKIAVVAGYGDVGKGCAQALAALRAQVWVTEIDPICALQAAMEGYKVVTMEEAAPHADIFVTATGNYHVITREHMQAMKDQAIVCNIGHFDNEIDVAALDDCQWEEIKPQVDHVVFPDGKRIILLAKGRLVNLGCATGHPSFVMSSSFANQTIAQIELYTRNEAYTRGQVYVLPKHLDEKVARLHLKKLGAKLTSLRQDQADYINVPVEGPYKPDHYRY.

Substrate is bound by residues threonine 62, aspartate 137, and glutamate 197. Residue 198-200 (TTT) coordinates NAD(+). 2 residues coordinate substrate: lysine 227 and aspartate 231. Residues asparagine 232, 261 to 266 (GYGDVG), glutamate 284, asparagine 319, 340 to 342 (IGH), and asparagine 385 contribute to the NAD(+) site.

The protein belongs to the adenosylhomocysteinase family. NAD(+) serves as cofactor.

It is found in the cytoplasm. The catalysed reaction is S-adenosyl-L-homocysteine + H2O = L-homocysteine + adenosine. The protein operates within amino-acid biosynthesis; L-homocysteine biosynthesis; L-homocysteine from S-adenosyl-L-homocysteine: step 1/1. Its function is as follows. May play a key role in the regulation of the intracellular concentration of adenosylhomocysteine. This Bordetella petrii (strain ATCC BAA-461 / DSM 12804 / CCUG 43448) protein is Adenosylhomocysteinase.